Here is a 218-residue protein sequence, read N- to C-terminus: 7-cyano-7-deazaguanine synthase (218 aa).

Y9–L19 is an ATP binding site. Residues C185, C193, C196, and C199 each contribute to the Zn(2+) site.

This sequence belongs to the QueC family. Zn(2+) serves as cofactor.

The catalysed reaction is 7-carboxy-7-deazaguanine + NH4(+) + ATP = 7-cyano-7-deazaguanine + ADP + phosphate + H2O + H(+). Its pathway is purine metabolism; 7-cyano-7-deazaguanine biosynthesis. In terms of biological role, catalyzes the ATP-dependent conversion of 7-carboxy-7-deazaguanine (CDG) to 7-cyano-7-deazaguanine (preQ(0)). The sequence is that of 7-cyano-7-deazaguanine synthase from Alteromonas mediterranea (strain DSM 17117 / CIP 110805 / LMG 28347 / Deep ecotype).